The sequence spans 193 residues: Non-specific lipid transfer protein GPI-anchored 10 (193 aa).

Residues 1–24 (MASSTLLITLLISLSAFFLRMVLA) form the signal peptide. Intrachain disulfides connect C30-C71, C40-C55, C56-C98, and C69-C107. N-linked (GlcNAc...) asparagine glycosylation is found at N76, N87, and N103. A disordered region spans residues 109-140 (SSFPGEAPSDSSSVAPPPSSSTGSQISQGAKN). Over residues 116 to 132 (PSDSSSVAPPPSSSTGS) the composition is skewed to low complexity. N140 carries an N-linked (GlcNAc...) asparagine glycan. A lipid anchor (GPI-anchor amidated serine) is attached at S168. Residues 169–193 (SGSKSEIQLTIFALAAILPAALLLI) constitute a propeptide, removed in mature form.

It belongs to the plant LTP family.

The protein localises to the cell membrane. In terms of biological role, probable lipid transfer protein. The polypeptide is Non-specific lipid transfer protein GPI-anchored 10 (Arabidopsis thaliana (Mouse-ear cress)).